We begin with the raw amino-acid sequence, 252 residues long: Probable transcriptional regulator SauR (252 aa).

The HTH iclR-type domain occupies 6-68 (NAAAVRAFRI…AGNRHYECSS (63 aa)). Residues 28-47 (LAAIVQAIELPKQTVHRILK) constitute a DNA-binding region (H-T-H motif). The IclR-ED domain occupies 83–252 (PAAARHAILQ…ADEMVKTFCE (170 aa)).

Its function is as follows. May regulate transcription of the sauSTU operon. The polypeptide is Probable transcriptional regulator SauR (sauR) (Cupriavidus necator (strain ATCC 17699 / DSM 428 / KCTC 22496 / NCIMB 10442 / H16 / Stanier 337) (Ralstonia eutropha)).